A 214-amino-acid polypeptide reads, in one-letter code: Calcineurin B homologous protein 3 (214 aa).

Gly-2 carries N-myristoyl glycine lipidation. In terms of domain architecture, EF-hand spans Cys-110–Gly-145. Positions 123, 125, 127, 129, and 134 each coordinate Ca(2+).

Belongs to the calcineurin regulatory subunit family. CHP subfamily. As to quaternary structure, monomer. Homodimer.

The protein localises to the nucleus. It localises to the cytoplasm. It is found in the membrane. The protein resides in the cell membrane. Its subcellular location is the cell projection. The protein localises to the lamellipodium. It localises to the ruffle membrane. Functions as an integral cofactor in cell pH regulation by controlling plasma membrane-type Na(+)/H(+) exchange activity. Promotes the induction of hematopoietic stem cell differentiation toward megakaryocytic lineage. Essential for the coupling of ERK cascade activation with the expression of ETS family genes in megakaryocytic differentiation. Also involved in granulocytic differentiation in a ERK-dependent manner. Inhibits the phosphatase activity of calcineurin. The chain is Calcineurin B homologous protein 3 (tesc) from Xenopus tropicalis (Western clawed frog).